The primary structure comprises 108 residues: Transcriptional activator HlyU (108 aa).

Residues glutamate 13–asparagine 107 form the HTH arsR-type domain. The segment at residues valine 47–alanine 66 is a DNA-binding region (H-T-H motif).

Functionally, up-regulates the expression of the hemolysin gene, hlyA, and may promote expression of other virulence determinants in vivo. It may have both positive and negative regulator activities. In Vibrio cholerae serotype O1 (strain ATCC 39315 / El Tor Inaba N16961), this protein is Transcriptional activator HlyU (hlyU).